A 114-amino-acid polypeptide reads, in one-letter code: Large ribosomal subunit protein bL19 (114 aa).

This sequence belongs to the bacterial ribosomal protein bL19 family.

This protein is located at the 30S-50S ribosomal subunit interface and may play a role in the structure and function of the aminoacyl-tRNA binding site. This chain is Large ribosomal subunit protein bL19, found in Bacillus mycoides (strain KBAB4) (Bacillus weihenstephanensis).